Consider the following 204-residue polypeptide: Thiamine-phosphate synthase (204 aa).

4-amino-2-methyl-5-(diphosphooxymethyl)pyrimidine is bound by residues 37–41 (QVREK) and Asn69. Positions 70 and 89 each coordinate Mg(2+). Ser108 is a binding site for 4-amino-2-methyl-5-(diphosphooxymethyl)pyrimidine. 134-136 (TGT) contacts 2-[(2R,5Z)-2-carboxy-4-methylthiazol-5(2H)-ylidene]ethyl phosphate. A 4-amino-2-methyl-5-(diphosphooxymethyl)pyrimidine-binding site is contributed by Lys137. 2-[(2R,5Z)-2-carboxy-4-methylthiazol-5(2H)-ylidene]ethyl phosphate contacts are provided by residues Gly165 and 185–186 (IS).

This sequence belongs to the thiamine-phosphate synthase family. Mg(2+) serves as cofactor.

It carries out the reaction 2-[(2R,5Z)-2-carboxy-4-methylthiazol-5(2H)-ylidene]ethyl phosphate + 4-amino-2-methyl-5-(diphosphooxymethyl)pyrimidine + 2 H(+) = thiamine phosphate + CO2 + diphosphate. It catalyses the reaction 2-(2-carboxy-4-methylthiazol-5-yl)ethyl phosphate + 4-amino-2-methyl-5-(diphosphooxymethyl)pyrimidine + 2 H(+) = thiamine phosphate + CO2 + diphosphate. The enzyme catalyses 4-methyl-5-(2-phosphooxyethyl)-thiazole + 4-amino-2-methyl-5-(diphosphooxymethyl)pyrimidine + H(+) = thiamine phosphate + diphosphate. The protein operates within cofactor biosynthesis; thiamine diphosphate biosynthesis; thiamine phosphate from 4-amino-2-methyl-5-diphosphomethylpyrimidine and 4-methyl-5-(2-phosphoethyl)-thiazole: step 1/1. In terms of biological role, condenses 4-methyl-5-(beta-hydroxyethyl)thiazole monophosphate (THZ-P) and 2-methyl-4-amino-5-hydroxymethyl pyrimidine pyrophosphate (HMP-PP) to form thiamine monophosphate (TMP). This chain is Thiamine-phosphate synthase, found in Clostridium novyi (strain NT).